The chain runs to 118 residues: Ribonuclease P protein component (118 aa).

This sequence belongs to the RnpA family. In terms of assembly, consists of a catalytic RNA component (M1 or rnpB) and a protein subunit.

The catalysed reaction is Endonucleolytic cleavage of RNA, removing 5'-extranucleotides from tRNA precursor.. RNaseP catalyzes the removal of the 5'-leader sequence from pre-tRNA to produce the mature 5'-terminus. It can also cleave other RNA substrates such as 4.5S RNA. The protein component plays an auxiliary but essential role in vivo by binding to the 5'-leader sequence and broadening the substrate specificity of the ribozyme. This chain is Ribonuclease P protein component, found in Rickettsia conorii (strain ATCC VR-613 / Malish 7).